Here is a 290-residue protein sequence, read N- to C-terminus: UPF0761 membrane protein YihY (290 aa).

A run of 6 helical transmembrane segments spans residues 44 to 64 (LLSLVPLVAVVFALFAAFPMF), 104 to 124 (VGACGLIVTALLLMYSIDSAL), 140 to 160 (FAVYWMILTLGPLLAGASLAI), 183 to 203 (IFPLLLSWISFWLLYSIVPTI), 210 to 230 (AIVGAFVAALLFEAGKKGFAL), and 244 to 264 (VLAVIPILFVWVYWTWCIVLL).

Belongs to the UPF0761 family.

The protein localises to the cell inner membrane. The chain is UPF0761 membrane protein YihY from Shigella boydii serotype 4 (strain Sb227).